Here is a 353-residue protein sequence, read N- to C-terminus: Peptide chain release factor 1 (353 aa).

N5-methylglutamine is present on glutamine 230.

The protein belongs to the prokaryotic/mitochondrial release factor family. Methylated by PrmC. Methylation increases the termination efficiency of RF1.

It localises to the cytoplasm. Its function is as follows. Peptide chain release factor 1 directs the termination of translation in response to the peptide chain termination codons UAG and UAA. The protein is Peptide chain release factor 1 of Leptospira biflexa serovar Patoc (strain Patoc 1 / ATCC 23582 / Paris).